The sequence spans 392 residues: uncharacterized protein (392 aa).

This sequence belongs to the chlamydial CPn_0675/CT_696/TC_0068 family.

This is an uncharacterized protein from Chlamydia trachomatis serovar D (strain ATCC VR-885 / DSM 19411 / UW-3/Cx).